Consider the following 601-residue polypeptide: ATP-dependent lipid A-core flippase (601 aa).

4 consecutive transmembrane segments (helical) span residues 27-47, 83-103, 174-194, and 267-287; these read IGLF…QPML, LLIV…NYFL, LLWM…LIAV, and PLLQ…VLYL. In terms of domain architecture, ABC transmembrane type-1 spans 31 to 322; the sequence is LISIVGFLIF…LSEVSSTIQK (292 aa). The ABC transporter domain occupies 354 to 590; sequence LEVRNLSFTY…NGYYSRLHAM (237 aa). An ATP-binding site is contributed by 388–395; that stretch reads GRSGSGKS.

Belongs to the ABC transporter superfamily. Lipid exporter (TC 3.A.1.106) family. Homodimer.

The protein resides in the cell inner membrane. It catalyses the reaction ATP + H2O + lipid A-core oligosaccharideSide 1 = ADP + phosphate + lipid A-core oligosaccharideSide 2.. Functionally, involved in lipopolysaccharide (LPS) biosynthesis. Translocates lipid A-core from the inner to the outer leaflet of the inner membrane. Transmembrane domains (TMD) form a pore in the inner membrane and the ATP-binding domain (NBD) is responsible for energy generation. The protein is ATP-dependent lipid A-core flippase of Pseudomonas fluorescens (strain ATCC BAA-477 / NRRL B-23932 / Pf-5).